The sequence spans 799 residues: Oxygen sensor protein DosP (799 aa).

Positions Ala10–Lys81 constitute a PAS 1 domain. Residues His69 and Met87 each coordinate heme. Residues Gln134 to Arg207 form the PAS 2 domain. The PAC domain maps to Asp208–Asn260. The GGDEF domain occupies Val402 to Pro532. In terms of domain architecture, EAL spans Arg541–Leu795.

In terms of assembly, homodimer; has been previously suggested to be a homotetramer based on size exclusion chromatography. Forms a complex with DosC. It depends on heme as a cofactor. The cofactor is Mg(2+). The heme distal ligand is coordinated by Met-87 in the active Fe(2+) (ferrous) form, by O(2) in the O(2)-bound form and by H(2)O in the inactive Fe(3+) (ferric) form.

It catalyses the reaction 3',3'-c-di-GMP + H2O = 5'-phosphoguanylyl(3'-&gt;5')guanosine + H(+). With respect to regulation, has c-di-GMP PDE activity in both Fe(2+) and Fe(3+)-bound forms; this activity is increased 6-7 fold by binding of O(2) and CO and NO. Has cAMP PDE activity only when the heme is in the Fe(2+) form. cAMP PDE activity is inhibited by oxidation of the heme iron and by binding of external ligands such as CO and NO. Also strongly inhibited by etazolate hydrochloride, a selective cAMP PDE inhibitor. PDE activity is inhibited in the absence of oxygen. Functionally, heme-based oxygen sensor protein displaying phosphodiesterase (PDE) activity toward c-di-GMP in response to oxygen availability. Involved in the modulation of intracellular c-di-GMP levels, in association with DosC which catalyzes the biosynthesis of c-di-GMP (diguanylate cyclase activity). Cyclic-di-GMP is a second messenger which controls cell surface-associated traits in bacteria. Has very poor PDE activity on cAMP but is not active with cGMP, bis(p-nitrophenyl) phosphate or p-nitrophenyl phosphate. Via its PDE activity on c-di-GMP, DosP regulates biofilm formation through the repression of transcription of the csgBAC operon, which encodes curli structural subunits. This is Oxygen sensor protein DosP (dosP) from Escherichia coli (strain K12).